A 1293-amino-acid polypeptide reads, in one-letter code: Cilia- and flagella-associated protein 57 A (1293 aa).

One copy of the WD 1 repeat lies at P72 to K113. The interval Q117–E143 is disordered. Residues P122–E143 show a composition bias toward basic and acidic residues. 5 WD repeats span residues P309–Y348, D359–N398, F411–S450, R535–T574, and S700–K739. Coiled-coil stretches lie at residues R756–T1016, I1045–T1079, and I1209–N1285.

The protein belongs to the CFAP57 family. In terms of assembly, forms a heterodimer with CFAP57C. Associates with components of the nexin-dynein regulatory complex (N-DRC) and the CFAP184:CFAP263 complex.

The protein localises to the cell projection. The protein resides in the cilium. Its function is as follows. Associates with components of the nexin-dynein regulatory complex (N-DRC), a key regulator of ciliary/flagellar motility, and might act as an inner dynein arm (IDA) hub or linkage. The polypeptide is Cilia- and flagella-associated protein 57 A (CFAP57A) (Tetrahymena thermophila (strain SB210)).